Here is a 218-residue protein sequence, read N- to C-terminus: Small ribosomal subunit protein uS3c (218 aa).

Residues 47–118 form the KH type-2 domain; sequence VQKNIRISSG…KLNIAITRIS (72 aa).

This sequence belongs to the universal ribosomal protein uS3 family. As to quaternary structure, part of the 30S ribosomal subunit.

It is found in the plastid. Its subcellular location is the chloroplast. This is Small ribosomal subunit protein uS3c (rps3) from Aethionema cordifolium (Lebanon stonecress).